The following is a 313-amino-acid chain: Chemotaxis protein CheV2 (313 aa).

A CheW-like domain is found at 16-172; it reads EAQFLCFRLD…VEKMISDVFP (157 aa). The region spanning 193 to 313 is the Response regulatory domain; the sequence is LILIAEDSLS…IHEMLKKTLS (121 aa). Residue Asp246 is modified to 4-aspartylphosphate.

In terms of processing, phosphorylated; probably by transfer of CheAY phosphate group.

Its function is as follows. Plays a role in chemotaxis signal transduction system in order to colonize the host stomach. May act as a phosphate sink to control the flow of phosphate to CheAY. The sequence is that of Chemotaxis protein CheV2 from Helicobacter pylori (strain ATCC 700392 / 26695) (Campylobacter pylori).